An 801-amino-acid chain; its full sequence is Glycerol-3-phosphate acyltransferase 2, mitochondrial (801 aa).

Residues 1–24 (MDTMLKSNPQTQQRSNHNGQETSL) are disordered. Topologically, residues 1-305 (MDTMLKSNPQ…PGPRLSALGQ (305 aa)) are cytoplasmic. The acyltransferase stretch occupies residues 180–290 (QLHKGQMKMV…SGQPLLIFLE (111 aa)). The HXXXXD motif signature appears at 205 to 210 (HKSLLD). Residues 306-332 (AWLGVVIQAVQAGIISDATLVPVAIAY) traverse the membrane as a helical segment. At 333 to 449 (DLVPDAPCNM…QLLVRRLSRH (117 aa)) the chain is on the mitochondrial intermembrane side. A helical transmembrane segment spans residues 450–472 (VLSASVASSAVMSTAIMATLLLL). Over 473–801 (KHQKGVVLSQ…EQFIRQFICS (329 aa)) the chain is Cytoplasmic. A Phosphoserine modification is found at Ser-662. The residue at position 666 (Thr-666) is a Phosphothreonine. Residues Ser-668 and Ser-670 each carry the phosphoserine modification.

It belongs to the GPAT/DAPAT family. As to quaternary structure, interacts with PIWIL2. As to expression, highly expressed in the testis. Expressed at lower levels in the heart, liver, kidney, spleen and adipose cells. Only detected in primary spermatocytes.

The protein resides in the mitochondrion outer membrane. It carries out the reaction sn-glycerol 3-phosphate + an acyl-CoA = a 1-acyl-sn-glycero-3-phosphate + CoA. The catalysed reaction is a 1-acyl-sn-glycero-3-phosphate + an acyl-CoA = a 1,2-diacyl-sn-glycero-3-phosphate + CoA. The enzyme catalyses 1-(9Z-octadecenoyl)-sn-glycero-3-phosphate + (9Z)-octadecenoyl-CoA = 1,2-di-(9Z-octadecenoyl)-sn-glycero-3-phosphate + CoA. It catalyses the reaction 1-(9Z-octadecenoyl)-sn-glycero-3-phosphate + (5Z,8Z,11Z,14Z)-eicosatetraenoyl-CoA = 1-(9Z)-octadecenoyl-2-(5Z,8Z,11Z,14Z)-eicosatetraenoyl-sn-glycero-3-phosphate + CoA. It carries out the reaction (5Z,8Z,11Z,14Z)-eicosatetraenoyl-CoA + sn-glycerol 3-phosphate = 1-(5Z,8Z,11Z,14Z-eicosatetraenoyl)-sn-glycero-3-phosphate + CoA. Its pathway is phospholipid metabolism; CDP-diacylglycerol biosynthesis; CDP-diacylglycerol from sn-glycerol 3-phosphate: step 1/3. Its activity is regulated as follows. Inhibited by N-ethylmaleimide (NEM). In terms of biological role, transfers an acyl-group from acyl-ACP to the sn-1 position of glycerol-3-phosphate producing a lysophosphatidic acid (LPA), an essential step for the triacylglycerol (TAG) and glycerophospholipids. In vitro also transfers an acyl-group from acyl-ACP to the LPA producing a phosphatidic acid (PA). Prefers arachidonoyl-CoA as the acyl donor. Required for primary processing step during piRNA biosynthesis. Molecular mechanisms by which it promotes piRNA biosynthesis are unclear and do not involve its acyltransferase activity. This is Glycerol-3-phosphate acyltransferase 2, mitochondrial from Mus musculus (Mouse).